The sequence spans 382 residues: 3-ketosteroid-9-alpha-monooxygenase, oxygenase component (382 aa).

In terms of domain architecture, Rieske spans 20–122 (WHCLGLSRTF…TMEKHGQLFV (103 aa)). Positions 61, 63, 80, and 83 each coordinate [2Fe-2S] cluster. Fe cation-binding residues include N169, H175, H180, and D298.

As to quaternary structure, homotrimer. The two-component system 3-ketosteroid-9-alpha-monooxygenase is composed of an oxygenase component KshA and a reductase component KshB. Requires [2Fe-2S] cluster as cofactor. It depends on Fe cation as a cofactor.

It catalyses the reaction androsta-1,4-diene-3,17-dione + 2 reduced [2Fe-2S]-[ferredoxin] + O2 + 2 H(+) = 9alpha-hydroxyandrosta-1,4-diene-3,17-dione + 2 oxidized [2Fe-2S]-[ferredoxin] + H2O. In terms of biological role, in vitro, catalyzes the introduction of a 9alpha-hydroxyl moiety into the ring B of 3-ketosteroid substrates such as 1,4-androstadiene-3,17-dione (ADD), 4-androstene-3,17-dione (AD), 4-androstene-17beta-ol-3-one (testosterone), 4-pregnene-3,20-dione (progesterone), 23,24-bisnorcholesta-4-ene-22-oate and 23,24-bisnorcholesta-1,4-diene-22-oate. This Rhodococcus rhodochrous protein is 3-ketosteroid-9-alpha-monooxygenase, oxygenase component.